Consider the following 325-residue polypeptide: Putative gluconeogenesis factor (325 aa).

It belongs to the gluconeogenesis factor family.

It is found in the cytoplasm. Required for morphogenesis under gluconeogenic growth conditions. This chain is Putative gluconeogenesis factor, found in Streptococcus pyogenes serotype M1.